The primary structure comprises 189 residues: Notch ligand osm-11 (189 aa).

An N-terminal signal peptide occupies residues 1 to 18 (MNFITVAALAIVMVLAQA).

In terms of assembly, may interact with lin-12/Notch receptor. In terms of tissue distribution, expressed in coelomocytes (at protein level).

It localises to the apical cell membrane. Functionally, probable secreted lin-12/Notch ligand or co-ligand involved in the mediation of Notch signaling. Involved in the lin-12/Notch pathway signaling of cell fate in vulval precursor cells (VPCs), acting redundantly with dsl-1 and lag-2. Required for normal octanol avoidance response, acting via both lin-12/Notch and glp-1/Notch signaling pathways in neurons, in concert with lag-2. Involved in regulation of sleep-like quiescence during the larval to adult transition, acting via Notch receptor activation and in parallel with EGF signaling. The chain is Notch ligand osm-11 from Caenorhabditis elegans.